A 61-amino-acid chain; its full sequence is Weak toxin CM-2a (61 aa).

Intrachain disulfides connect C3/C19, C12/C37, C41/C49, and C50/C55.

The protein belongs to the three-finger toxin family. Short-chain subfamily. Orphan group XX sub-subfamily. Expressed by the venom gland.

The protein resides in the secreted. The protein is Weak toxin CM-2a of Naja annulifera (Banded Egyptian cobra).